The sequence spans 86 residues: Small ribosomal subunit protein uS17 (86 aa).

The protein belongs to the universal ribosomal protein uS17 family. In terms of assembly, part of the 30S ribosomal subunit.

Functionally, one of the primary rRNA binding proteins, it binds specifically to the 5'-end of 16S ribosomal RNA. This is Small ribosomal subunit protein uS17 from Bifidobacterium adolescentis (strain ATCC 15703 / DSM 20083 / NCTC 11814 / E194a).